A 100-amino-acid chain; its full sequence is Urease subunit gamma (100 aa).

The protein belongs to the urease gamma subunit family. As to quaternary structure, heterotrimer of UreA (gamma), UreB (beta) and UreC (alpha) subunits. Three heterotrimers associate to form the active enzyme.

Its subcellular location is the cytoplasm. The enzyme catalyses urea + 2 H2O + H(+) = hydrogencarbonate + 2 NH4(+). Its pathway is nitrogen metabolism; urea degradation; CO(2) and NH(3) from urea (urease route): step 1/1. The protein is Urease subunit gamma of Arthrobacter sp. (strain FB24).